The sequence spans 543 residues: Cytochrome P450 monooxygenase 205 (543 aa).

Residues 9 to 29 (LISLGVAALAVAVWKAIVMVI) traverse the membrane as a helical segment. Asn332 and Asn434 each carry an N-linked (GlcNAc...) asparagine glycan. Cys479 lines the heme pocket.

Belongs to the cytochrome P450 family. It depends on heme as a cofactor.

It is found in the membrane. It functions in the pathway secondary metabolite biosynthesis. Cytochrome P450 monooxygenase that is able to use carbazole and phenanthrene as substrates for oxidation. This chain is Cytochrome P450 monooxygenase 205, found in Postia placenta (strain ATCC 44394 / Madison 698-R) (Brown rot fungus).